The sequence spans 106 residues: UPF0145 protein Csac_0771 (106 aa).

Belongs to the UPF0145 family.

This is UPF0145 protein Csac_0771 from Caldicellulosiruptor saccharolyticus (strain ATCC 43494 / DSM 8903 / Tp8T 6331).